A 124-amino-acid chain; its full sequence is CD59 glycoprotein (124 aa).

The first 24 residues, 1–24 (MTSRGVHLLLRLLFLLAVFYSSDS), serve as a signal peptide directing secretion. The UPAR/Ly6 domain maps to 25–101 (SLMCYHCLLP…DLCNGPEDDG (77 aa)). 5 disulfide bridges follow: C28-C51, C31-C38, C44-C64, C70-C88, and C89-C94. A glycan (N-linked (GlcNAc...) asparagine) is linked at N37. A lipid anchor (GPI-anchor amidated glycine) is attached at G101. Residues 102–124 (TALTGRTVLLVAPLLAAARNLCL) constitute a propeptide, removed in mature form.

As to quaternary structure, interacts with T-cell surface antigen CD2. N- and O-glycosylated.

It localises to the cell membrane. The protein resides in the secreted. Functionally, potent inhibitor of the complement membrane attack complex (MAC) action, which protects self-cells from damage during complement activation. Acts by binding to the beta-haipins of C8 (C8A and C8B) components of the assembling MAC, forming an intermolecular beta-sheet that prevents incorporation of the multiple copies of C9 required for complete formation of the osmolytic pore. The chain is CD59 glycoprotein from Oryctolagus cuniculus (Rabbit).